We begin with the raw amino-acid sequence, 703 residues long: Pentatricopeptide repeat-containing protein At1g22830 (703 aa).

PPR repeat units follow at residues 82-116, 117-147, 148-182, 183-217, 218-248, 249-283, 284-318, 319-353, 356-386, 387-421, 422-452, 458-488, 489-523, 524-554, and 560-594; these read VLYS…GLEF, DSVL…SEIL, HPLP…GIRA, DEFT…SHRC, NLYV…MSER, DAVS…GVEA, SIVT…NVRI, GSVA…CSFS, IDNV…VEAN, SLST…GFHP, NHIT…ILRR, CLIL…MRKR, DKVT…GIKP, DHVT…MEHV, and RLEH…PSSA. Positions 595–671 are type E motif; sequence MCATLLKACL…AHEFALMETD (77 aa). A disordered region spans residues 671 to 703; the sequence is DSELDGENNKPMNDDSVINQEQSSDEERLVEVG.

The protein belongs to the PPR family. PCMP-E subfamily.

In Arabidopsis thaliana (Mouse-ear cress), this protein is Pentatricopeptide repeat-containing protein At1g22830 (PCMP-E24).